Here is a 982-residue protein sequence, read N- to C-terminus: Nitrate reductase [NADPH] (982 aa).

The tract at residues 1-128 is disordered; it reads MEAPALEQRQ…PPSTRLTTIL (128 aa). A compositionally biased stretch (basic and acidic residues) spans 10 to 20; sequence QSLHDSSERQQ. Low complexity predominate over residues 63 to 110; the sequence is TASPTTTDFSSSSSDDNSTTLETSVNYSHSSNTNTNTSCPPSPITSSS. Cys-240 is a binding site for Mo-molybdopterin. The region spanning 617–692 is the Cytochrome b5 heme-binding domain; that stretch reads TRLITLEELR…MPTYHIGTLT (76 aa). Heme-binding residues include His-652 and His-675. The FAD-binding FR-type domain maps to 721–836; that stretch reads KTWNSAILTF…KGPVGKFVYQ (116 aa). Residues 776-779, 794-798, 810-812, Ser-860, and Thr-863 contribute to the FAD site; these read RAYT, LVKIY, and QMT. 952–961 provides a ligand contact to NADP(+); the sequence is MVLLCGPEGM.

The protein belongs to the nitrate reductase family. As to quaternary structure, homodimer. Requires FAD as cofactor. It depends on heme as a cofactor. The cofactor is Mo-molybdopterin.

It catalyses the reaction nitrite + NADP(+) + H2O = nitrate + NADPH + H(+). Its pathway is nitrogen metabolism; nitrate reduction (assimilation). In terms of biological role, nitrate reductase is a key enzyme involved in the first step of nitrate assimilation in plants, fungi and bacteria. This Neurospora crassa (strain ATCC 24698 / 74-OR23-1A / CBS 708.71 / DSM 1257 / FGSC 987) protein is Nitrate reductase [NADPH] (nit-3).